The following is a 323-amino-acid chain: tRNA U34 carboxymethyltransferase (323 aa).

Carboxy-S-adenosyl-L-methionine-binding positions include lysine 91, tryptophan 105, lysine 110, glycine 130, aspartate 152–threonine 154, isoleucine 181–glutamate 182, methionine 196, tyrosine 200, and arginine 315.

The protein belongs to the class I-like SAM-binding methyltransferase superfamily. CmoB family. As to quaternary structure, homotetramer.

The catalysed reaction is carboxy-S-adenosyl-L-methionine + 5-hydroxyuridine(34) in tRNA = 5-carboxymethoxyuridine(34) in tRNA + S-adenosyl-L-homocysteine + H(+). Functionally, catalyzes carboxymethyl transfer from carboxy-S-adenosyl-L-methionine (Cx-SAM) to 5-hydroxyuridine (ho5U) to form 5-carboxymethoxyuridine (cmo5U) at position 34 in tRNAs. This chain is tRNA U34 carboxymethyltransferase, found in Escherichia coli O8 (strain IAI1).